We begin with the raw amino-acid sequence, 190 residues long: Tereporin-Ca1 (190 aa).

The segment at 2–21 is N-terminal region; the sequence is TAGSSLAGTTLSGLAASGYR. Phosphocholine contacts are provided by Gly-78, Ser-96, Pro-98, Tyr-131, and Tyr-132. The short motif at 138–140 is the Cell attachment site, crucial for protein stability element; that stretch reads KGE.

This sequence belongs to the actinoporin family. Conoidea subfamily. In terms of assembly, octamer or nonamer in membranes. Monomer in the soluble state. In terms of tissue distribution, expressed by the venom duct.

It localises to the secreted. The protein localises to the nematocyst. Its subcellular location is the target cell membrane. In terms of biological role, pore-forming protein that forms pores of around 1 nm and causes cardiac stimulation and cytolysis. The sequence is that of Tereporin-Ca1 from Terebra anilis (Auger snail).